The chain runs to 394 residues: Cell division protein FtsZ (394 aa).

Residues 21–25 (GGGNN), 108–110 (GTG), Glu139, Arg143, and Asp187 each bind GTP. Positions 317 to 394 (DKPSSQGRKA…EERRSRRTRR (78 aa)) are disordered. Low complexity-rich tracts occupy residues 328-346 (STGF…SGAS) and 353-364 (SAHTSHSQSSES). The segment covering 365–388 (VNERSHTTKDDDIPSFIRNREERR) has biased composition (basic and acidic residues).

The protein belongs to the FtsZ family. In terms of assembly, homodimer. Polymerizes to form a dynamic ring structure in a strictly GTP-dependent manner. Interacts directly with several other division proteins.

Its subcellular location is the cytoplasm. Functionally, essential cell division protein that forms a contractile ring structure (Z ring) at the future cell division site. The regulation of the ring assembly controls the timing and the location of cell division. One of the functions of the FtsZ ring is to recruit other cell division proteins to the septum to produce a new cell wall between the dividing cells. Binds GTP and shows GTPase activity. The polypeptide is Cell division protein FtsZ (Staphylococcus epidermidis (strain ATCC 12228 / FDA PCI 1200)).